An 84-amino-acid chain; its full sequence is Beta-defensin 119 (84 aa).

An N-terminal signal peptide occupies residues Met-1–Gly-21. 3 disulfide bridges follow: Cys-28–Cys-55, Cys-35–Cys-49, and Cys-39–Cys-56.

The protein belongs to the beta-defensin family.

It localises to the secreted. In terms of biological role, has antibacterial activity. The polypeptide is Beta-defensin 119 (DEFB119) (Pongo pygmaeus (Bornean orangutan)).